A 636-amino-acid polypeptide reads, in one-letter code: MNSNSTIGRTTLGESDTISLSFSEPSSSLNSRSTDVVFASTSTLVPQQGSLTSLPPVSSTATPTYYSTSLTYDETLHTSIDVSSTSTLVSSTDSSSSSEQDTYSSQYDPATSSYSIITPSMSIFSSTSPMSSSSSITSEWSSLTSTTPTLSSSATSLSSSWSSLSSPSSLLVSSSLSLSLSSSYSDTKLFSFDSRSSIFSPSTPTVISPSYTYLSSISATSFQISTTSELSSSWFSTISSPSTISNKDTTFPSSSRNTSTSFYSSSLSSTNDFSTISKSSKLSPSASSSTVSISTISVPTSSSVSSSSSKVPSNRPSSSSSSDDTTSAYSSTYTFQSLQSTTSSSIPPTTQTPSTSTISTSPIPTSSQVFNTVAISSSEDSKTIYYFYTQTYDITDSSTTFVTGLPTTIAVAKSEVTSFSAPSSTITADMSFYQHWLDGSLDNNKNQGTSKTNTGTIVGSVVGSVGGILICVLVVWFMLVRKRKAKRHFKENDSFCHEIGRRTGFPTTAQAKEASLQAQDSGSQQRNTETASANNPFSNEFNFKARGNPPPVPPPRNVTAMNGSFQNMRSNFMDQENRFSYGSSFTYSSLGSSTQGGFSTLSSNSIRLGRGLDNDISHDERNTVQNNSQGFLREII.

Polar residues predominate over residues 1–18; sequence MNSNSTIGRTTLGESDTI. Disordered regions lie at residues 1-33, 87-109, 246-271, 299-326, and 339-362; these read MNSN…NSRS, TLVS…QYDP, NKDT…SSTN, PTSS…DDTT, and QSTT…STSP. A glycan (N-linked (GlcNAc...) asparagine) is linked at N4. 2 stretches are compositionally biased toward low complexity: residues 19–33 and 87–108; these read SLSF…NSRS and TLVS…SQYD. A glycan (N-linked (GlcNAc...) asparagine) is linked at N257. Residues 457-477 form a helical membrane-spanning segment; sequence IVGSVVGSVGGILICVLVVWF. A glycan (N-linked (GlcNAc...) asparagine) is linked at N492. Polar residues predominate over residues 510–541; sequence QAKEASLQAQDSGSQQRNTETASANNPFSNEF. Residues 510-551 are disordered; that stretch reads QAKEASLQAQDSGSQQRNTETASANNPFSNEFNFKARGNPPP. K512 is covalently cross-linked (Glycyl lysine isopeptide (Lys-Gly) (interchain with G-Cter in ubiquitin)). N-linked (GlcNAc...) asparagine glycans are attached at residues N557, N562, and N626. S628 is subject to Phosphoserine.

It belongs to the TDA7 family.

The protein resides in the vacuole membrane. This Saccharomyces cerevisiae (strain ATCC 204508 / S288c) (Baker's yeast) protein is Topoisomerase I damage affected protein 7 (TDA7).